The chain runs to 205 residues: MFIFFYLFATLITISSLCVVLSKNSVYSVLWLIFAFINGAGLMILLGAEFLAMMLIVIYVGAVAVLFLFVIMMLDMHFNKTITQLKENLALSSFIALIMFADLVTIILLGTKNINFISDVSFTITNDISNTKAIGKVLYTDFMLPFQMAGLILFVAMIACITLTLKKREGVKHQDITKQLSHNKSNVVLMTKPTLNKGVENIKYE.

5 helical membrane-spanning segments follow: residues 1 to 21 (MFIFFYLFATLITISSLCVVL), 26 to 46 (VYSVLWLIFAFINGAGLMILL), 54 to 74 (MLIVIYVGAVAVLFLFVIMML), 89 to 109 (LALSSFIALIMFADLVTIILL), and 142 to 162 (FMLPFQMAGLILFVAMIACIT).

The protein belongs to the complex I subunit 6 family.

Its subcellular location is the cell membrane. It catalyses the reaction a quinone + NADH + 5 H(+)(in) = a quinol + NAD(+) + 4 H(+)(out). NDH-1 shuttles electrons from NADH, via FMN and iron-sulfur (Fe-S) centers, to quinones in the respiratory chain. Couples the redox reaction to proton translocation (for every two electrons transferred, four hydrogen ions are translocated across the cytoplasmic membrane), and thus conserves the redox energy in a proton gradient. The protein is NADH-quinone oxidoreductase subunit J (nuoJ) of Rickettsia felis (strain ATCC VR-1525 / URRWXCal2) (Rickettsia azadi).